A 509-amino-acid polypeptide reads, in one-letter code: Maturase K (509 aa).

Belongs to the intron maturase 2 family. MatK subfamily.

The protein resides in the plastid. It is found in the chloroplast. Usually encoded in the trnK tRNA gene intron. Probably assists in splicing its own and other chloroplast group II introns. The sequence is that of Maturase K from Solanum tuberosum (Potato).